The sequence spans 553 residues: 2-succinyl-5-enolpyruvyl-6-hydroxy-3-cyclohexene-1-carboxylate synthase (553 aa).

The protein belongs to the TPP enzyme family. MenD subfamily. Homodimer. The cofactor is Mg(2+). Requires Mn(2+) as cofactor. Thiamine diphosphate serves as cofactor.

The enzyme catalyses isochorismate + 2-oxoglutarate + H(+) = 5-enolpyruvoyl-6-hydroxy-2-succinyl-cyclohex-3-ene-1-carboxylate + CO2. The protein operates within quinol/quinone metabolism; 1,4-dihydroxy-2-naphthoate biosynthesis; 1,4-dihydroxy-2-naphthoate from chorismate: step 2/7. It functions in the pathway quinol/quinone metabolism; menaquinone biosynthesis. Its function is as follows. Catalyzes the thiamine diphosphate-dependent decarboxylation of 2-oxoglutarate and the subsequent addition of the resulting succinic semialdehyde-thiamine pyrophosphate anion to isochorismate to yield 2-succinyl-5-enolpyruvyl-6-hydroxy-3-cyclohexene-1-carboxylate (SEPHCHC). The polypeptide is 2-succinyl-5-enolpyruvyl-6-hydroxy-3-cyclohexene-1-carboxylate synthase (Thermobifida fusca (strain YX)).